The chain runs to 95 residues: UPF0235 protein Swoo_1329 (95 aa).

Belongs to the UPF0235 family.

In Shewanella woodyi (strain ATCC 51908 / MS32), this protein is UPF0235 protein Swoo_1329.